A 251-amino-acid polypeptide reads, in one-letter code: Ubiquinone/menaquinone biosynthesis C-methyltransferase UbiE (251 aa).

Residues threonine 74, aspartate 95, and asparagine 123–alanine 124 each bind S-adenosyl-L-methionine.

This sequence belongs to the class I-like SAM-binding methyltransferase superfamily. MenG/UbiE family.

The catalysed reaction is a 2-demethylmenaquinol + S-adenosyl-L-methionine = a menaquinol + S-adenosyl-L-homocysteine + H(+). The enzyme catalyses a 2-methoxy-6-(all-trans-polyprenyl)benzene-1,4-diol + S-adenosyl-L-methionine = a 5-methoxy-2-methyl-3-(all-trans-polyprenyl)benzene-1,4-diol + S-adenosyl-L-homocysteine + H(+). Its pathway is quinol/quinone metabolism; menaquinone biosynthesis; menaquinol from 1,4-dihydroxy-2-naphthoate: step 2/2. The protein operates within cofactor biosynthesis; ubiquinone biosynthesis. Functionally, methyltransferase required for the conversion of demethylmenaquinol (DMKH2) to menaquinol (MKH2) and the conversion of 2-polyprenyl-6-methoxy-1,4-benzoquinol (DDMQH2) to 2-polyprenyl-3-methyl-6-methoxy-1,4-benzoquinol (DMQH2). In Shewanella oneidensis (strain ATCC 700550 / JCM 31522 / CIP 106686 / LMG 19005 / NCIMB 14063 / MR-1), this protein is Ubiquinone/menaquinone biosynthesis C-methyltransferase UbiE.